Reading from the N-terminus, the 327-residue chain is Delta(3,5)-Delta(2,4)-dienoyl-CoA isomerase, mitochondrial (327 aa).

A mitochondrion-targeting transit peptide spans 1 to 33; that stretch reads MATAMTVSSKLLGLLMQQLRGTRQLYFNVSLRS. Substrate contacts are provided by residues 115-119 and G173; that span reads SGIDL. N6-succinyllysine is present on K230. At S267 the chain carries Phosphoserine. Residue K316 is modified to N6-succinyllysine. Positions 325 to 327 match the Microbody targeting signal motif; it reads SKL. K326 bears the N6-acetyllysine mark.

Belongs to the enoyl-CoA hydratase/isomerase family. In terms of assembly, homohexamer. In terms of tissue distribution, expressed in heart and liver (at protein level).

It localises to the mitochondrion. Its subcellular location is the peroxisome. It carries out the reaction (3E,5Z)-octadienoyl-CoA = (2E,4E)-octadienoyl-CoA. It catalyses the reaction (3E,5Z,8Z,11Z,14Z)-eicosapentaenoyl-CoA = (2E,4E,8Z,11Z,14Z)-eicosapentaenoyl-CoA. It functions in the pathway lipid metabolism; fatty acid beta-oxidation. Isomerization of 3-trans,5-cis-dienoyl-CoA to 2-trans,4-trans-dienoyl-CoA. The sequence is that of Delta(3,5)-Delta(2,4)-dienoyl-CoA isomerase, mitochondrial from Rattus norvegicus (Rat).